We begin with the raw amino-acid sequence, 231 residues long: Lipoprotein-releasing system ATP-binding protein LolD (231 aa).

The 226-residue stretch at 6-231 folds into the ABC transporter domain; it reads LQVQAVSKSY…YLQAVAEHAQ (226 aa). Residue 42–49 participates in ATP binding; sequence GTSGSGKS.

This sequence belongs to the ABC transporter superfamily. Lipoprotein translocase (TC 3.A.1.125) family. In terms of assembly, the complex is composed of two ATP-binding proteins (LolD) and two transmembrane proteins (LolC and LolE).

It is found in the cell inner membrane. Part of the ABC transporter complex LolCDE involved in the translocation of mature outer membrane-directed lipoproteins, from the inner membrane to the periplasmic chaperone, LolA. Responsible for the formation of the LolA-lipoprotein complex in an ATP-dependent manner. This Shewanella sp. (strain MR-4) protein is Lipoprotein-releasing system ATP-binding protein LolD.